Consider the following 454-residue polypeptide: Probable mitochondrial saccharopine dehydrogenase-like oxidoreductase At5g39410 (454 aa).

Met1 carries the post-translational modification N-acetylmethionine. Residues 215–234 are disordered; the sequence is RRSRPRRPRPTICGPPAKGP.

The protein belongs to the saccharopine dehydrogenase family.

It is found in the mitochondrion membrane. In Arabidopsis thaliana (Mouse-ear cress), this protein is Probable mitochondrial saccharopine dehydrogenase-like oxidoreductase At5g39410.